The chain runs to 305 residues: UDP-N-acetylenolpyruvoylglucosamine reductase 2 (305 aa).

Residues 33–197 form the FAD-binding PCMH-type domain; sequence VGGKADVFVA…LEARFELEEG (165 aa). Arginine 176 is an active-site residue. Residue serine 226 is the Proton donor of the active site. Glutamate 296 is an active-site residue.

The protein belongs to the MurB family. FAD serves as cofactor.

It localises to the cytoplasm. The catalysed reaction is UDP-N-acetyl-alpha-D-muramate + NADP(+) = UDP-N-acetyl-3-O-(1-carboxyvinyl)-alpha-D-glucosamine + NADPH + H(+). It functions in the pathway cell wall biogenesis; peptidoglycan biosynthesis. Its function is as follows. Cell wall formation. The sequence is that of UDP-N-acetylenolpyruvoylglucosamine reductase 2 from Bacillus cereus (strain ZK / E33L).